A 608-amino-acid polypeptide reads, in one-letter code: V-type ATP synthase subunit I (608 aa).

A run of 9 helical transmembrane segments spans residues 308-325 (ISFI…MIIG), 327-346 (AAYG…SFLL), 356-376 (GLIF…GTWF), 405-425 (IIFI…VWNF), 438-458 (IAQI…LNLI), 464-484 (FPMY…VFVF), 495-515 (CILK…SGFA), 517-537 (IISY…SASF), and 550-570 (IGLI…NIML).

Belongs to the V-ATPase 116 kDa subunit family.

It is found in the cell membrane. Produces ATP from ADP in the presence of a proton gradient across the membrane. This is V-type ATP synthase subunit I (atpI) from Borreliella burgdorferi (strain ATCC 35210 / DSM 4680 / CIP 102532 / B31) (Borrelia burgdorferi).